The sequence spans 180 residues: Large ribosomal subunit protein uL6 (180 aa).

The protein belongs to the universal ribosomal protein uL6 family. In terms of assembly, part of the 50S ribosomal subunit.

Functionally, this protein binds to the 23S rRNA, and is important in its secondary structure. It is located near the subunit interface in the base of the L7/L12 stalk, and near the tRNA binding site of the peptidyltransferase center. This chain is Large ribosomal subunit protein uL6, found in Desulforapulum autotrophicum (strain ATCC 43914 / DSM 3382 / VKM B-1955 / HRM2) (Desulfobacterium autotrophicum).